The primary structure comprises 297 residues: Phosphatidylserine decarboxylase proenzyme (297 aa).

Residues D92, H149, and S254 each act as charge relay system; for autoendoproteolytic cleavage activity in the active site. The active-site Schiff-base intermediate with substrate; via pyruvic acid; for decarboxylase activity is S254. S254 is modified (pyruvic acid (Ser); by autocatalysis).

Belongs to the phosphatidylserine decarboxylase family. PSD-B subfamily. Prokaryotic type I sub-subfamily. Heterodimer of a large membrane-associated beta subunit and a small pyruvoyl-containing alpha subunit. Pyruvate is required as a cofactor. Is synthesized initially as an inactive proenzyme. Formation of the active enzyme involves a self-maturation process in which the active site pyruvoyl group is generated from an internal serine residue via an autocatalytic post-translational modification. Two non-identical subunits are generated from the proenzyme in this reaction, and the pyruvate is formed at the N-terminus of the alpha chain, which is derived from the carboxyl end of the proenzyme. The autoendoproteolytic cleavage occurs by a canonical serine protease mechanism, in which the side chain hydroxyl group of the serine supplies its oxygen atom to form the C-terminus of the beta chain, while the remainder of the serine residue undergoes an oxidative deamination to produce ammonia and the pyruvoyl prosthetic group on the alpha chain. During this reaction, the Ser that is part of the protease active site of the proenzyme becomes the pyruvoyl prosthetic group, which constitutes an essential element of the active site of the mature decarboxylase.

It localises to the cell membrane. The catalysed reaction is a 1,2-diacyl-sn-glycero-3-phospho-L-serine + H(+) = a 1,2-diacyl-sn-glycero-3-phosphoethanolamine + CO2. The protein operates within phospholipid metabolism; phosphatidylethanolamine biosynthesis; phosphatidylethanolamine from CDP-diacylglycerol: step 2/2. Functionally, catalyzes the formation of phosphatidylethanolamine (PtdEtn) from phosphatidylserine (PtdSer). The polypeptide is Phosphatidylserine decarboxylase proenzyme (Bordetella parapertussis (strain 12822 / ATCC BAA-587 / NCTC 13253)).